We begin with the raw amino-acid sequence, 163 residues long: Glutathione peroxidase-like peroxiredoxin HYR1 (163 aa).

Catalysis depends on cysteine 36, which acts as the Cysteine sulfenic acid (-SOH) intermediate. Cysteine 36 and cysteine 82 are joined by a disulfide.

The protein belongs to the glutathione peroxidase family. As to quaternary structure, interacts with YAP1 and probably YBP1.

It is found in the cytoplasm. It localises to the mitochondrion intermembrane space. The protein resides in the peroxisome matrix. It catalyses the reaction a hydroperoxide + [thioredoxin]-dithiol = an alcohol + [thioredoxin]-disulfide + H2O. In terms of biological role, involved in oxidative stress response and redox homeostasis. Functions as a sensor and transducer of hydroperoxide stress. In response to hydroperoxide stress it oxidizes (activates) the transcription activator YAP1, which is involved in transcription activation of genes of the oxidative stress response pathway. May also play a direct role in hydroperoxide scavenging, being the most active of three closely related S.cerevisiae peroxiredoxins (GPX1, GPX2, and HYR1/GPX3) with respect to peroxide and lipid hydroperoxide reduction. The three enzymes are not required for the glutaredoxin-mediated antioxidant function. In the presence of peroxides, HYR1/GPX3 is directly oxidized at Cys-36 to form a cysteine sulfenic acid (-SOH). Cys-36-SOH then forms either an intramolecular disulfide bond (Cys-36 with Cys-82) or a transient, intermolecular disulfide bond with 'Cys-598' of YAP1, which is further resolved into a YAP1 intramolecular disulfide bond ('Cys-303' with 'Cys-598'), which causes its nuclear accumulation and activation, and a reduced Cys-36 in HYR1/GPX3. This is Glutathione peroxidase-like peroxiredoxin HYR1 from Saccharomyces cerevisiae (strain ATCC 204508 / S288c) (Baker's yeast).